The primary structure comprises 642 residues: Sodium-dependent phosphate transport protein 2A (642 aa).

The Cytoplasmic portion of the chain corresponds to 1 to 106; the sequence is MISYGEQLSS…LRRTAMTLLK (106 aa). Serine 14 and serine 37 each carry phosphoserine. Residues 107–128 traverse the membrane as a helical segment; that stretch reads LPLMVTFLYLFVCSLDVLSSAF. The Extracellular segment spans residues 129 to 148; it reads QLAGGKVAGDIFKDNAILAN. A helical membrane pass occupies residues 149-166; it reads PVAGLVVGILVTVLVQSS. Over 167–168 the chain is Cytoplasmic; the sequence is ST. The chain crosses the membrane as a helical span at residues 169–188; sequence ATSIIVSMVSSGLLEVSSAI. Topologically, residues 189 to 350 are extracellular; that stretch reads PIIMGSNIGT…HIFVDTQLPD (162 aa). Intrachain disulfides connect cysteine 228/cysteine 525 and cysteine 309/cysteine 339. Asparagine 301, asparagine 326, and asparagine 333 each carry an N-linked (GlcNAc...) asparagine glycan. The helical transmembrane segment at 351-373 threads the bilayer; that stretch reads LAVGLILLAGSLVLLCTCLILLV. Residues 374–415 lie on the Cytoplasmic side of the membrane; that stretch reads KMLNSLLKGQVAKVIQKVINTDLPAPFTWVTGYFAMVVGAAM. The helical transmembrane segment at 416–439 threads the bilayer; it reads TFIVQSSSVFTSAITPLVGLGVIS. Residues 440–469 are Extracellular-facing; the sequence is IERAYPLTLGSNIGTTTTAILAALASPREK. Residues 470 to 490 traverse the membrane as a helical segment; sequence LSSSFQIALCHFFFNISGILL. Topologically, residues 491 to 516 are cytoplasmic; the sequence is WYPLPCTRLPIRMAKALGKRTAKYRW. Threonine 511 carries the phosphothreonine; by PKC modification. A helical transmembrane segment spans residues 517–537; that stretch reads FAVLYLLVCFLLLPSLVFGIS. The Extracellular portion of the chain corresponds to 538 to 542; it reads MAGWR. Residues 543–564 traverse the membrane as a helical segment; it reads AMVGVGAPFGALLAFVVLINVL. Residues 565-642 are Cytoplasmic-facing; the sequence is QSRSPGRLPK…LPAHHNATRL (78 aa). Position 610 is a phosphoserine (serine 610). Threonine 626 carries the phosphothreonine modification. Serine 628 carries the phosphoserine modification.

The protein belongs to the SLC34A transporter family. Interacts via its C-terminal region with NHERF4. Interacts with NHERF1. Interacts with TMEM174; regulates SLC34A1 internalization by PTH and FGF23. Expressed in the kidney cortex.

The protein resides in the apical cell membrane. It is found in the cell membrane. It carries out the reaction 3 Na(+)(out) + phosphate(out) = 3 Na(+)(in) + phosphate(in). Its activity is regulated as follows. Transport activity is significantly increased in response to dietary phosphate deprivation. Its function is as follows. Involved in actively transporting phosphate into cells via Na(+) cotransport in the renal brush border membrane. The cotransport has a Na(+):Pi stoichiometry of 3:1 and is electrogenic. In Oryctolagus cuniculus (Rabbit), this protein is Sodium-dependent phosphate transport protein 2A.